Consider the following 848-residue polypeptide: Mitochondrial escape protein 2 (848 aa).

The transit peptide at 1–42 (MNSITTPRMGATILRTIAPNVGVLSQVLPLGLRRVYPRGVRW) directs the protein to the mitochondrion. Residues 43 to 284 (VSSEIQQKDR…IRNFYVTHTR (242 aa)) lie on the Mitochondrial matrix side of the membrane. One can recognise an RRM domain in the interval 196–269 (TTVIIKCQGP…TVLHLQYENV (74 aa)). A helical transmembrane segment spans residues 285 to 305 (IAIPVTFALLSILAVLIFDPI). The Mitochondrial intermembrane portion of the chain corresponds to 306–848 (REFFIEQKIT…LSQESNNRRK (543 aa)). Residues 603–627 (RAKKAEEDEPTEKASPEHSQYDEND) are disordered. Over residues 613 to 627 (TEKASPEHSQYDEND) the composition is skewed to basic and acidic residues.

It belongs to the YME2 family.

It is found in the mitochondrion inner membrane. Plays a role in maintaining the mitochondrial genome and in controlling the mtDNA escape. Involved in the regulation of mtDNA nucleotide structure and number. May have a dispensable role in early maturation of pre-rRNA. The sequence is that of Mitochondrial escape protein 2 (YME2) from Candida glabrata (strain ATCC 2001 / BCRC 20586 / JCM 3761 / NBRC 0622 / NRRL Y-65 / CBS 138) (Yeast).